A 136-amino-acid chain; its full sequence is Large ribosomal subunit protein eL27 (136 aa).

The KOW domain occupies 5–40; the sequence is MKPGKVVMVLAGRYAGRKAVIVKNIDDGTADRPYSH.

Belongs to the eukaryotic ribosomal protein eL27 family. As to quaternary structure, component of the large ribosomal subunit.

It localises to the cytoplasm. The protein resides in the cytosol. It is found in the rough endoplasmic reticulum. In terms of biological role, component of the large ribosomal subunit. In Hippocampus comes (Tiger tail seahorse), this protein is Large ribosomal subunit protein eL27 (rpl27).